Consider the following 253-residue polypeptide: Toxin PezT (253 aa).

39–46 (GQSGAGKT) lines the ATP pocket. Catalysis depends on Asp-66, which acts as the Proton acceptor.

This sequence belongs to the zeta toxin family. As to quaternary structure, forms a PezA(2)PezT(2) heterotetramer. The heterotetramer is much more stable than either of the proteins alone, and a specific mechanism may be necessary to liberate the toxin.

The enzyme catalyses UDP-N-acetyl-alpha-D-glucosamine + ATP = UDP-N-acetyl-alpha-D-glucosamine 3'-phosphate + ADP + H(+). Functionally, toxic component of a type II toxin-antitoxin (TA) system. Phosphorylates UDP-N-acetyl-D-glucosamine (UNAG) on the 3'-hydroxyl group of the N-acetyl-D-glucosamine moiety, yielding UNAG-3P. UNAG-3P inhibits MurA, the first committed step in cell wall synthesis, which is then blocked. Upon expression in E.coli results in decreased cell growth and viability, followed 3 hours later by growth restoration; the toxic effect and phosphorylation of UNAG are neutralized by coexpression with cognate antitoxin PezA. A mutant lacking the last 11 residues is stably maintained in E.coli, unlike the wild-type which undergoes spontaneous mutation. Expression of the deletion mutant in rapidly growing liquid cultures leads to cell bulging, permeabilization and massive lysis by 1 hour. Cells that survive are not able to undergo cytokinesis. Expression in slowly growing cells leads to bulging but not lysis. Its function is as follows. Acts as a corepressor of its own operon with PezA; it is not clear if it binds DNA alone. The protein is Toxin PezT (pezT) of Streptococcus pneumoniae serotype 4 (strain ATCC BAA-334 / TIGR4).